A 191-amino-acid polypeptide reads, in one-letter code: Gastrokine-3 (191 aa).

The signal sequence occupies residues 1-30 (MPLHSLERDNMRRLIAPSILVTVFLVPALA). N33 carries an N-linked (GlcNAc...) asparagine glycan. A BRICHOS domain is found at 63 to 155 (NSVQSEWDGV…LCRAVPTYFA (93 aa)). C90 and C147 are disulfide-bonded.

Belongs to the gastrokine family. In terms of tissue distribution, expressed in stomach. Present in mucus cells at the base of antral glands, and Brunner glands of the duodenum. Present at lower levels in the mucus neck cell region of the fundus (at protein level).

It is found in the secreted. Inhibits gastric epithelial cell proliferation. This chain is Gastrokine-3 (Gkn3), found in Mus musculus (Mouse).